The primary structure comprises 267 residues: Acetylglutamate kinase (267 aa).

Residues G53–G54, R75, and N167 contribute to the substrate site.

Belongs to the acetylglutamate kinase family. ArgB subfamily.

The protein resides in the cytoplasm. The catalysed reaction is N-acetyl-L-glutamate + ATP = N-acetyl-L-glutamyl 5-phosphate + ADP. Its pathway is amino-acid biosynthesis; L-arginine biosynthesis; N(2)-acetyl-L-ornithine from L-glutamate: step 2/4. Functionally, catalyzes the ATP-dependent phosphorylation of N-acetyl-L-glutamate. This is Acetylglutamate kinase from Shewanella pealeana (strain ATCC 700345 / ANG-SQ1).